Consider the following 288-residue polypeptide: Beta-lactamase CARB-3 (288 aa).

Positions 1–17 (MKFLLAFSLLIPSVVFA) are cleaved as a signal peptide. Ser-65 acts as the Acyl-ester intermediate in catalysis. Cysteines 72 and 118 form a disulfide. Substrate is bound at residue 229 to 231 (RSG).

This sequence belongs to the class-A beta-lactamase family.

The catalysed reaction is a beta-lactam + H2O = a substituted beta-amino acid. Functionally, hydrolyzes both carbenicillin and oxacillin. This chain is Beta-lactamase CARB-3 (carB3), found in Pseudomonas aeruginosa.